A 174-amino-acid polypeptide reads, in one-letter code: Inosine/xanthosine triphosphatase (174 aa).

Asp68 provides a ligand contact to Mg(2+). 68-69 (DA) contributes to the substrate binding site.

It belongs to the YjjX NTPase family. As to quaternary structure, homodimer. It depends on Mg(2+) as a cofactor. Mn(2+) is required as a cofactor.

It carries out the reaction XTP + H2O = XDP + phosphate + H(+). It catalyses the reaction ITP + H2O = IDP + phosphate + H(+). Functionally, phosphatase that hydrolyzes non-canonical purine nucleotides such as XTP and ITP to their respective diphosphate derivatives. Probably excludes non-canonical purines from DNA/RNA precursor pool, thus preventing their incorporation into DNA/RNA and avoiding chromosomal lesions. This chain is Inosine/xanthosine triphosphatase, found in Photobacterium profundum (strain SS9).